A 299-amino-acid polypeptide reads, in one-letter code: Bifunctional protein FolD 2 (299 aa).

It belongs to the tetrahydrofolate dehydrogenase/cyclohydrolase family. In terms of assembly, homodimer.

It catalyses the reaction (6R)-5,10-methylene-5,6,7,8-tetrahydrofolate + NADP(+) = (6R)-5,10-methenyltetrahydrofolate + NADPH. The enzyme catalyses (6R)-5,10-methenyltetrahydrofolate + H2O = (6R)-10-formyltetrahydrofolate + H(+). Its pathway is one-carbon metabolism; tetrahydrofolate interconversion. In terms of biological role, catalyzes the oxidation of 5,10-methylenetetrahydrofolate to 5,10-methenyltetrahydrofolate and then the hydrolysis of 5,10-methenyltetrahydrofolate to 10-formyltetrahydrofolate. This is Bifunctional protein FolD 2 (FOLD2) from Arabidopsis thaliana (Mouse-ear cress).